A 151-amino-acid chain; its full sequence is Immunity protein YezG (151 aa).

Positions Lys62 to Val90 form a coiled coil.

In terms of assembly, interacts with cognate toxin YeeF but not with non-cognate toxin YobL. The interaction probably inhibits the toxic activity of YeeF. May bind with a stoichiometry of 2:2 to YeeF.

It is found in the cytoplasm. Its function is as follows. Immunity component of one of 6 LXG toxin-immunity modules in this strain. They promote kin selection, mediate competition in biofilms, and drive spatial segregation of different strains, indicating that LXG toxins may help avoid warfare between strains in biofilms. Mediates intercellular competition during biofilm formation; disruption of the operon disadvantages the bacteria, but overexpression of the cognate immunity protein restores growth in competition with wild-type. In situ neutralizes the toxic effect of cognate toxin YeeF. Probably neutralizes the ability to inhibit growth of cognate toxin YeeF. Probably does not have immunity protein activity on other LXG toxins. The chain is Immunity protein YezG (yezG) from Bacillus subtilis (strain 168).